The following is a 562-amino-acid chain: NAD-dependent malic enzyme (562 aa).

Y101 acts as the Proton donor in catalysis. R154 is a binding site for NAD(+). The active-site Proton acceptor is the K172. E243, D244, and D267 together coordinate a divalent metal cation. NAD(+) is bound by residues D267 and N415.

Belongs to the malic enzymes family. Homotetramer. Mg(2+) serves as cofactor. Mn(2+) is required as a cofactor.

The catalysed reaction is (S)-malate + NAD(+) = pyruvate + CO2 + NADH. It catalyses the reaction oxaloacetate + H(+) = pyruvate + CO2. In Shewanella oneidensis (strain ATCC 700550 / JCM 31522 / CIP 106686 / LMG 19005 / NCIMB 14063 / MR-1), this protein is NAD-dependent malic enzyme.